Reading from the N-terminus, the 228-residue chain is Prolactin-2B1 (228 aa).

An N-terminal signal peptide occupies residues 1-31; the sequence is MLLYLPQIFSSRASSLLFLVPYLLFWENVAS. 2 disulfides stabilise this stretch: cysteine 89/cysteine 194 and cysteine 203/cysteine 228. Asparagine 173 carries an N-linked (GlcNAc...) asparagine glycan.

It belongs to the somatotropin/prolactin family. Expression restricted to the placenta in trophoblast cells within the labyrinth zone.

It is found in the secreted. The chain is Prolactin-2B1 (Prl2b1) from Rattus norvegicus (Rat).